A 284-amino-acid polypeptide reads, in one-letter code: 2-dehydro-3-deoxyphosphooctonate aldolase (284 aa).

Belongs to the KdsA family.

The protein localises to the cytoplasm. It catalyses the reaction D-arabinose 5-phosphate + phosphoenolpyruvate + H2O = 3-deoxy-alpha-D-manno-2-octulosonate-8-phosphate + phosphate. It functions in the pathway carbohydrate biosynthesis; 3-deoxy-D-manno-octulosonate biosynthesis; 3-deoxy-D-manno-octulosonate from D-ribulose 5-phosphate: step 2/3. It participates in bacterial outer membrane biogenesis; lipopolysaccharide biosynthesis. The protein is 2-dehydro-3-deoxyphosphooctonate aldolase of Salmonella paratyphi A (strain ATCC 9150 / SARB42).